Here is a 501-residue protein sequence, read N- to C-terminus: Mitogen-activated protein kinase 16 (501 aa).

The Protein kinase domain maps to 22–313; that stretch reads YEVTEVVGKG…AAEALTDPYF (292 aa). Residues 28-36 and Lys-51 each bind ATP; that span reads VGKGSYGVV. The active-site Proton acceptor is the Asp-148. Thr-184 bears the Phosphothreonine mark. The TXY signature appears at 184–186; sequence TDY. Tyr-186 is subject to Phosphotyrosine. The segment at 477-501 is disordered; that stretch reads DEESMSEYMNEAADGVPHKIAQLKT.

Belongs to the protein kinase superfamily. CMGC Ser/Thr protein kinase family. MAP kinase subfamily. Dually phosphorylated on Thr-184 and Tyr-186, which activates the enzyme.

It catalyses the reaction L-seryl-[protein] + ATP = O-phospho-L-seryl-[protein] + ADP + H(+). The enzyme catalyses L-threonyl-[protein] + ATP = O-phospho-L-threonyl-[protein] + ADP + H(+). Activated by threonine and tyrosine phosphorylation. The protein is Mitogen-activated protein kinase 16 (MPK16) of Oryza sativa subsp. japonica (Rice).